We begin with the raw amino-acid sequence, 507 residues long: ATP synthase subunit alpha, chloroplastic (507 aa).

170–177 (GDRQTGKT) contacts ATP.

Belongs to the ATPase alpha/beta chains family. In terms of assembly, F-type ATPases have 2 components, CF(1) - the catalytic core - and CF(0) - the membrane proton channel. CF(1) has five subunits: alpha(3), beta(3), gamma(1), delta(1), epsilon(1). CF(0) has four main subunits: a, b, b' and c.

Its subcellular location is the plastid. The protein localises to the chloroplast thylakoid membrane. The catalysed reaction is ATP + H2O + 4 H(+)(in) = ADP + phosphate + 5 H(+)(out). Its function is as follows. Produces ATP from ADP in the presence of a proton gradient across the membrane. The alpha chain is a regulatory subunit. This is ATP synthase subunit alpha, chloroplastic from Nandina domestica (Heavenly bamboo).